Reading from the N-terminus, the 328-residue chain is Biotin synthase (328 aa).

The 226-residue stretch at 42–267 folds into the Radical SAM core domain; sequence YHVQLASLLS…LMPGSRVRLS (226 aa). [4Fe-4S] cluster-binding residues include Cys-57, Cys-61, and Cys-64. Residues Cys-101, Cys-133, Cys-193, and Arg-265 each contribute to the [2Fe-2S] cluster site.

It belongs to the radical SAM superfamily. Biotin synthase family. Homodimer. The cofactor is [4Fe-4S] cluster. Requires [2Fe-2S] cluster as cofactor.

It carries out the reaction (4R,5S)-dethiobiotin + (sulfur carrier)-SH + 2 reduced [2Fe-2S]-[ferredoxin] + 2 S-adenosyl-L-methionine = (sulfur carrier)-H + biotin + 2 5'-deoxyadenosine + 2 L-methionine + 2 oxidized [2Fe-2S]-[ferredoxin]. It functions in the pathway cofactor biosynthesis; biotin biosynthesis; biotin from 7,8-diaminononanoate: step 2/2. Catalyzes the conversion of dethiobiotin (DTB) to biotin by the insertion of a sulfur atom into dethiobiotin via a radical-based mechanism. The sequence is that of Biotin synthase from Synechococcus sp. (strain CC9311).